A 158-amino-acid chain; its full sequence is Cyclic pyranopterin monophosphate synthase (158 aa).

Residues 75–77 and 113–114 contribute to the substrate site; these read LCH and ME. Aspartate 128 is a catalytic residue.

The protein belongs to the MoaC family. Homohexamer; trimer of dimers.

It carries out the reaction (8S)-3',8-cyclo-7,8-dihydroguanosine 5'-triphosphate = cyclic pyranopterin phosphate + diphosphate. The protein operates within cofactor biosynthesis; molybdopterin biosynthesis. Functionally, catalyzes the conversion of (8S)-3',8-cyclo-7,8-dihydroguanosine 5'-triphosphate to cyclic pyranopterin monophosphate (cPMP). The protein is Cyclic pyranopterin monophosphate synthase of Roseiflexus sp. (strain RS-1).